We begin with the raw amino-acid sequence, 135 residues long: C-type natriuretic peptide (135 aa).

Residues 1 to 25 (MSGHTSFYCGLLLLLLIQVQARPRA) form the signal peptide. Residues 26–113 (DDSLQVLSRL…PLRFKGRSKK (88 aa)) constitute a propeptide that is removed on maturation. The tract at residues 46-67 (EELNNEAQEISPAASLPDLNTD) is disordered. Cysteines 119 and 135 form a disulfide.

It belongs to the natriuretic peptide family.

It localises to the secreted. Functionally, hormone which may be vasoactive and natriuretic. Has a cGMP-stimulating activity. This Squalus acanthias (Spiny dogfish) protein is C-type natriuretic peptide.